The primary structure comprises 259 residues: Thiazole synthase (259 aa).

K95 serves as the catalytic Schiff-base intermediate with DXP. 1-deoxy-D-xylulose 5-phosphate contacts are provided by residues G156, 183 to 184, and 205 to 206; these read AG and NS.

It belongs to the ThiG family. Homotetramer. Forms heterodimers with either ThiH or ThiS.

The protein resides in the cytoplasm. It carries out the reaction [ThiS sulfur-carrier protein]-C-terminal-Gly-aminoethanethioate + 2-iminoacetate + 1-deoxy-D-xylulose 5-phosphate = [ThiS sulfur-carrier protein]-C-terminal Gly-Gly + 2-[(2R,5Z)-2-carboxy-4-methylthiazol-5(2H)-ylidene]ethyl phosphate + 2 H2O + H(+). It functions in the pathway cofactor biosynthesis; thiamine diphosphate biosynthesis. Its function is as follows. Catalyzes the rearrangement of 1-deoxy-D-xylulose 5-phosphate (DXP) to produce the thiazole phosphate moiety of thiamine. Sulfur is provided by the thiocarboxylate moiety of the carrier protein ThiS. In vitro, sulfur can be provided by H(2)S. This is Thiazole synthase from Coxiella burnetii (strain CbuK_Q154) (Coxiella burnetii (strain Q154)).